A 415-amino-acid polypeptide reads, in one-letter code: Tyrosine--tRNA ligase (415 aa).

Position 34 (Tyr-34) interacts with L-tyrosine. The short motif at 39-48 (PTSDSLTVGH) is the 'HIGH' region element. L-tyrosine-binding residues include Tyr-164 and Gln-168. Residues 225–229 (KFGKS) carry the 'KMSKS' region motif. Lys-228 provides a ligand contact to ATP. An S4 RNA-binding domain is found at 348–414 (IPLSEALVKT…GKKNNSLIIL (67 aa)).

It belongs to the class-I aminoacyl-tRNA synthetase family. TyrS type 1 subfamily. As to quaternary structure, homodimer.

It is found in the cytoplasm. It catalyses the reaction tRNA(Tyr) + L-tyrosine + ATP = L-tyrosyl-tRNA(Tyr) + AMP + diphosphate + H(+). Catalyzes the attachment of tyrosine to tRNA(Tyr) in a two-step reaction: tyrosine is first activated by ATP to form Tyr-AMP and then transferred to the acceptor end of tRNA(Tyr). This chain is Tyrosine--tRNA ligase, found in Phytoplasma australiense.